The chain runs to 575 residues: Bifunctional decalin synthase calF (575 aa).

The first 18 residues, 1–18 (MSFKPLLLSLSLLSPALG), serve as a signal peptide directing secretion. Residues asparagine 46, asparagine 103, asparagine 127, asparagine 175, asparagine 268, asparagine 308, asparagine 359, asparagine 425, and asparagine 485 are each glycosylated (N-linked (GlcNAc...) asparagine). In terms of domain architecture, FAD-binding PCMH-type spans 118 to 297 (LGNYASYSIN…LSMTTKVFQD (180 aa)).

This sequence belongs to the oxygen-dependent FAD-linked oxidoreductase family.

The protein operates within secondary metabolite biosynthesis. Bifunctional decaline synthase; part of the gene cluster that mediates the biosynthesis of calbistrin A and related compounds. Calbistrin A is a secondary metabolite with an interesting structure that was recently found to have bioactivity against leukemia cells. It consists of two polyketides linked by an ester bond: a bicyclic decalin containing polyketide and a linear 12 carbon dioic acid structure. The polyketide synthase calA is probably responsible for forming the decalin moiety. Because calA lacks a designated enoylreductase (ER) domain, the required activity is provided by the trans-enoyl reductase calK. Following release from the PKS, calF then probably catalyzes the oxidation and the subsequent Diels Alder cycloisomerization that lead to the formation of the decalin moiety. The decalin polyketide backbone includes two C-methyl groups, at C7 and C11 in backbone, of which the C7 position is probably methylated by the methyltransferase domain of calA. A candidate for adding the methyl group at C11, if not done by CalA, is the cluster methyltransferase calH. Several additional tailoring enzymes within the cluster could be involved in the modification of the decalin polyketide product. Those include the 3 cytochrome P450 monooxygenases CalE, CalG and CalL, of which one might be responsible for the introduction of the extra hydroxyl group attached to the backbone of the decalin moiety, at position C9 in the backbone, that allows for attachment of the linear moiety. One tailoring enzyme activity that is expected to be involved in biosynthesis of calbistrin is an acyltransferase for connecting the two polyketide synthase products, and which could be performed by the cluster acyltransferase calJ. The enzyme responsible for the biosynthesis of the linear moiety, probably a second PKS, has not been identified yet. The polypeptide is Bifunctional decalin synthase calF (Penicillium decumbens).